The primary structure comprises 263 residues: Type III pantothenate kinase (263 aa).

14–21 lines the ATP pocket; sequence DIGNTSVN. 115–118 serves as a coordination point for substrate; sequence GADR. Catalysis depends on aspartate 117, which acts as the Proton acceptor. Aspartate 137 contributes to the K(+) binding site. Residue threonine 140 participates in ATP binding. Threonine 192 is a binding site for substrate.

It belongs to the type III pantothenate kinase family. Homodimer. The cofactor is NH4(+). Requires K(+) as cofactor.

Its subcellular location is the cytoplasm. The enzyme catalyses (R)-pantothenate + ATP = (R)-4'-phosphopantothenate + ADP + H(+). It participates in cofactor biosynthesis; coenzyme A biosynthesis; CoA from (R)-pantothenate: step 1/5. In terms of biological role, catalyzes the phosphorylation of pantothenate (Pan), the first step in CoA biosynthesis. In Dehalococcoides mccartyi (strain CBDB1), this protein is Type III pantothenate kinase.